Consider the following 613-residue polypeptide: Glutamyl-tRNA(Gln) amidotransferase subunit E (613 aa).

The protein belongs to the GatB/GatE family. GatE subfamily. In terms of assembly, heterodimer of GatD and GatE.

The catalysed reaction is L-glutamyl-tRNA(Gln) + L-glutamine + ATP + H2O = L-glutaminyl-tRNA(Gln) + L-glutamate + ADP + phosphate + H(+). Functionally, allows the formation of correctly charged Gln-tRNA(Gln) through the transamidation of misacylated Glu-tRNA(Gln) in organisms which lack glutaminyl-tRNA synthetase. The reaction takes place in the presence of glutamine and ATP through an activated gamma-phospho-Glu-tRNA(Gln). The GatDE system is specific for glutamate and does not act on aspartate. This Archaeoglobus fulgidus (strain ATCC 49558 / DSM 4304 / JCM 9628 / NBRC 100126 / VC-16) protein is Glutamyl-tRNA(Gln) amidotransferase subunit E.